The following is a 302-amino-acid chain: Oxygen-dependent coproporphyrinogen-III oxidase (302 aa).

Serine 94 is a binding site for substrate. Positions 98 and 108 each coordinate a divalent metal cation. Catalysis depends on histidine 108, which acts as the Proton donor. Substrate is bound at residue 110–112 (NVR). A divalent metal cation-binding residues include histidine 147 and histidine 177. The important for dimerization stretch occupies residues 242-277 (YVEFNLVYDRGTLFGLQTGGRTESILMSMPPLVRWQ). Position 260-262 (260-262 (GGR)) interacts with substrate.

Belongs to the aerobic coproporphyrinogen-III oxidase family. In terms of assembly, homodimer. A divalent metal cation is required as a cofactor.

It is found in the cytoplasm. It catalyses the reaction coproporphyrinogen III + O2 + 2 H(+) = protoporphyrinogen IX + 2 CO2 + 2 H2O. Its pathway is porphyrin-containing compound metabolism; protoporphyrin-IX biosynthesis; protoporphyrinogen-IX from coproporphyrinogen-III (O2 route): step 1/1. Functionally, involved in the heme biosynthesis. Catalyzes the aerobic oxidative decarboxylation of propionate groups of rings A and B of coproporphyrinogen-III to yield the vinyl groups in protoporphyrinogen-IX. The sequence is that of Oxygen-dependent coproporphyrinogen-III oxidase from Shewanella sp. (strain MR-4).